The sequence spans 111 residues: Small ribosomal subunit protein bS16 (111 aa).

It belongs to the bacterial ribosomal protein bS16 family.

The chain is Small ribosomal subunit protein bS16 from Rickettsia africae (strain ESF-5).